A 278-amino-acid chain; its full sequence is Undecaprenyl-diphosphatase 2 (278 aa).

Transmembrane regions (helical) follow at residues 1–21 (MSII…FLPI), 38–58 (FPGF…VILY), 85–105 (FMFA…GLLL), 118–138 (FIAG…RFFV), 191–211 (SFLL…GDLL), 223–243 (PLII…IWLI), and 251–271 (LIYF…YFDH).

This sequence belongs to the UppP family.

It localises to the cell membrane. The enzyme catalyses di-trans,octa-cis-undecaprenyl diphosphate + H2O = di-trans,octa-cis-undecaprenyl phosphate + phosphate + H(+). Catalyzes the dephosphorylation of undecaprenyl diphosphate (UPP). Confers resistance to bacitracin. The chain is Undecaprenyl-diphosphatase 2 from Halalkalibacterium halodurans (strain ATCC BAA-125 / DSM 18197 / FERM 7344 / JCM 9153 / C-125) (Bacillus halodurans).